The primary structure comprises 680 residues: DNA-directed RNA polymerase subunit beta' (680 aa).

Zn(2+) is bound by residues Cys-69, Cys-71, Cys-87, and Cys-90. Asp-489, Asp-491, and Asp-493 together coordinate Mg(2+).

Belongs to the RNA polymerase beta' chain family. RpoC1 subfamily. In plastids the minimal PEP RNA polymerase catalytic core is composed of four subunits: alpha, beta, beta', and beta''. When a (nuclear-encoded) sigma factor is associated with the core the holoenzyme is formed, which can initiate transcription. Requires Mg(2+) as cofactor. The cofactor is Zn(2+).

It localises to the plastid. It is found in the chloroplast. It carries out the reaction RNA(n) + a ribonucleoside 5'-triphosphate = RNA(n+1) + diphosphate. In terms of biological role, DNA-dependent RNA polymerase catalyzes the transcription of DNA into RNA using the four ribonucleoside triphosphates as substrates. This chain is DNA-directed RNA polymerase subunit beta', found in Lepidium virginicum (Virginia pepperweed).